The chain runs to 137 residues: Large ribosomal subunit protein uL16 (137 aa).

The protein belongs to the universal ribosomal protein uL16 family. Part of the 50S ribosomal subunit.

Functionally, binds 23S rRNA and is also seen to make contacts with the A and possibly P site tRNAs. The polypeptide is Large ribosomal subunit protein uL16 (Halorhodospira halophila (strain DSM 244 / SL1) (Ectothiorhodospira halophila (strain DSM 244 / SL1))).